A 484-amino-acid polypeptide reads, in one-letter code: UDP-N-acetylmuramoyl-L-alanyl-D-glutamate--2,6-diaminopimelate ligase (484 aa).

Ser30 serves as a coordination point for UDP-N-acetyl-alpha-D-muramoyl-L-alanyl-D-glutamate. Residue 111-117 participates in ATP binding; the sequence is GTNGKTT. UDP-N-acetyl-alpha-D-muramoyl-L-alanyl-D-glutamate-binding positions include 153–154, Ser180, Gln186, and Arg188; that span reads TT. Lys220 carries the N6-carboxylysine modification. Meso-2,6-diaminopimelate-binding positions include Arg378, 402 to 405, Gly455, and Glu459; that span reads DNPR. A Meso-diaminopimelate recognition motif motif is present at residues 402–405; the sequence is DNPR.

This sequence belongs to the MurCDEF family. MurE subfamily. It depends on Mg(2+) as a cofactor. In terms of processing, carboxylation is probably crucial for Mg(2+) binding and, consequently, for the gamma-phosphate positioning of ATP.

The protein resides in the cytoplasm. It carries out the reaction UDP-N-acetyl-alpha-D-muramoyl-L-alanyl-D-glutamate + meso-2,6-diaminopimelate + ATP = UDP-N-acetyl-alpha-D-muramoyl-L-alanyl-gamma-D-glutamyl-meso-2,6-diaminopimelate + ADP + phosphate + H(+). Its pathway is cell wall biogenesis; peptidoglycan biosynthesis. Its function is as follows. Catalyzes the addition of meso-diaminopimelic acid to the nucleotide precursor UDP-N-acetylmuramoyl-L-alanyl-D-glutamate (UMAG) in the biosynthesis of bacterial cell-wall peptidoglycan. In Phocaeicola vulgatus (strain ATCC 8482 / DSM 1447 / JCM 5826 / CCUG 4940 / NBRC 14291 / NCTC 11154) (Bacteroides vulgatus), this protein is UDP-N-acetylmuramoyl-L-alanyl-D-glutamate--2,6-diaminopimelate ligase.